The primary structure comprises 247 residues: Oocyte zinc finger protein XlCOF20 (247 aa).

C2H2-type zinc fingers lie at residues 6–28 (YDCR…QRVH), 34–56 (FPCT…QRVH), 62–84 (FICS…LRVH), 90–112 (FVCT…QRVH), 118–140 (FTCT…LRVH), 146–168 (FVCT…LRVH), 174–196 (FMCA…QRIC), and 225–247 (QSCA…MRVH).

This sequence belongs to the krueppel C2H2-type zinc-finger protein family.

The protein resides in the nucleus. Functionally, may be involved in transcriptional regulation. The polypeptide is Oocyte zinc finger protein XlCOF20 (Xenopus laevis (African clawed frog)).